The following is a 397-amino-acid chain: Glia-derived nexin (397 aa).

The signal sequence occupies residues 1–19 (MNWHFPFFILTTVTLYSVH). N-linked (GlcNAc...) asparagine glycosylation is present at Asn-159.

This sequence belongs to the serpin family. As to expression, most abundant in seminal vesicles.

The protein resides in the secreted. It localises to the extracellular space. Its function is as follows. Serine protease inhibitor with activity toward thrombin, trypsin, and urokinase. Promotes neurite extension by inhibiting thrombin. Binds heparin. This chain is Glia-derived nexin (Serpine2), found in Mus musculus (Mouse).